The sequence spans 325 residues: uncharacterized protein (325 aa).

A helical transmembrane segment spans residues 67 to 87 (WIPFFLLFSSVVVLGGLWWLG).

Its subcellular location is the membrane. This is an uncharacterized protein from Synechocystis sp. (strain ATCC 27184 / PCC 6803 / Kazusa).